A 115-amino-acid polypeptide reads, in one-letter code: Putative type I restriction enzyme MpnIIP endonuclease subunit middle part (115 aa).

The middle section of a putative type I restriction enzyme that if reconstituted might recognize 5'-GAN(7)TAY-3' and cleave a random distance away. Subunit R is required for both nuclease and ATPase activities, but not for modification. This is Putative type I restriction enzyme MpnIIP endonuclease subunit middle part from Mycoplasma pneumoniae (strain ATCC 29342 / M129 / Subtype 1) (Mycoplasmoides pneumoniae).